Here is a 566-residue protein sequence, read N- to C-terminus: Probable cytochrome P450 519D1 (566 aa).

Residues 1-21 (MNVFVLTFFICIIYLLFDLIK) form a helical membrane-spanning segment. The interval 471 to 491 (FNNNNNNNNNNNNNNSNNKHK) is disordered. Low complexity predominate over residues 472 to 487 (NNNNNNNNNNNNNNSN). Cys-510 lines the heme pocket.

The protein belongs to the cytochrome P450 family. Requires heme as cofactor.

The protein localises to the membrane. This chain is Probable cytochrome P450 519D1 (cyp519D1), found in Dictyostelium discoideum (Social amoeba).